A 320-amino-acid chain; its full sequence is MDTDYGTVHTQQSVKGNTLILLIYFISFIVGFPGNCTVIWFTGYRWKKSVTTIWFLNLAIADTLFVIFIPFEITYILMGHYWPFGLFVCRIGSLMFNTGMYASIFFLTFISIDRYCLAFRRDICNKYRYRINIMVMIIISWIISILLSTPYMYFKNTNEKYRNNRDCLEDYHSDNNTYLLRRVVFCISLVMRYLVPSVVMLFCYCLLLFKHSLFLSKGQTYTIVIMITSFMVLWTPYNILYFIDVIGSHYYNADTIIDAAPISISLIFLSSSINPMIYMLVGRYVSFENYSMRESLKLILSEERDNQTNHENEIKMENIN.

Residues 1–18 (MDTDYGTVHTQQSVKGNT) lie on the Extracellular side of the membrane. The helical transmembrane segment at 19–39 (LILLIYFISFIVGFPGNCTVI) threads the bilayer. Residues 40 to 52 (WFTGYRWKKSVTT) are Cytoplasmic-facing. A helical membrane pass occupies residues 53 to 73 (IWFLNLAIADTLFVIFIPFEI). At 74-91 (TYILMGHYWPFGLFVCRI) the chain is on the extracellular side. Residues C89 and C167 are joined by a disulfide bond. The helical transmembrane segment at 92–112 (GSLMFNTGMYASIFFLTFISI) threads the bilayer. The Cytoplasmic segment spans residues 113-133 (DRYCLAFRRDICNKYRYRINI). Residues 134–154 (MVMIIISWIISILLSTPYMYF) traverse the membrane as a helical segment. The Extracellular portion of the chain corresponds to 155–188 (KNTNEKYRNNRDCLEDYHSDNNTYLLRRVVFCIS). N-linked (GlcNAc...) asparagine; by host glycosylation occurs at N175. A helical transmembrane segment spans residues 189-209 (LVMRYLVPSVVMLFCYCLLLF). Residues 210-222 (KHSLFLSKGQTYT) lie on the Cytoplasmic side of the membrane. Residues 223–243 (IVIMITSFMVLWTPYNILYFI) traverse the membrane as a helical segment. Residues 244 to 260 (DVIGSHYYNADTIIDAA) are Extracellular-facing. Residues 261-281 (PISISLIFLSSSINPMIYMLV) form a helical membrane-spanning segment. Over 282–320 (GRYVSFENYSMRESLKLILSEERDNQTNHENEIKMENIN) the chain is Cytoplasmic.

It belongs to the G-protein coupled receptor 1 family.

Its subcellular location is the host cell membrane. This Vertebrata (FPV) protein is G-protein coupled receptor homolog FPV021.